Consider the following 466-residue polypeptide: Chromogranin-A (466 aa).

Residues 1–18 form the signal peptide; that stretch reads MRSSAALALLLCAGQVFA. An intrachain disulfide couples Cys35 to Cys56. Residues 91–443 form a disordered region; it reads AQQQQQQQQQ…ANRRAEDQEL (353 aa). The span at 92 to 111 shows a compositional bias: low complexity; it reads QQQQQQQQQQQQQQQQQQQQ. At Ser114 the chain carries Phosphoserine. The span at 131 to 155 shows a compositional bias: basic and acidic residues; it reads KHGDAASEAPSKDTVEKREDSDKGQ. Residues 177–213 are compositionally biased toward polar residues; the sequence is ESSMMGNSQSPGEDTANNTQSPTSLPSQEHGIPQTTE. Ser215 carries the post-translational modification Phosphoserine. A compositionally biased stretch (acidic residues) spans 233–247; the sequence is KEEEEEEKEEEEEEK. Positions 248-259 are enriched in basic and acidic residues; the sequence is EEKAIAREKAGP. Ser288 and Ser312 each carry phosphoserine. Residues 305 to 314 are compositionally biased toward basic and acidic residues; the sequence is GKGELEHSQQ. Position 332 is a glycine amide (Gly332). A compositionally biased stretch (basic and acidic residues) spans 351-378; sequence RLSREWEDKRWSRMDQLAKELTAEKRLE. Residues Ser353 and Ser386 each carry the phosphoserine modification. Met387 is modified (methionine sulfoxide). Basic and acidic residues predominate over residues 412-440; it reads SSREDSVEARGDFEEKKEEEGSANRRAED. Ser413, Ser417, and Ser433 each carry phosphoserine. The O-linked (Xyl...) (chondroitin sulfate) serine glycan is linked to Ser433. Gln441 carries the post-translational modification Pyrrolidone carboxylic acid. A Phosphoserine modification is found at Ser447.

It belongs to the chromogranin/secretogranin protein family. As to quaternary structure, self-interacts; self-assembly is promoted in vitro by chondroitin sulfate attachment which occurs at mildly acidic pH conditions. Interacts with SCG3; this interaction is optimal in conditions mimicking the lumenal milieu of the trans-Golgi network, i.e. pH 5.5 and 10 mM Ca(+2). Interacts with ITPR1 in the secretory granules. Post-translationally, O-glycosylated; contains chondroitin sulfate (CS). CS attachment is pH-dependent, being observed at mildly acidic conditions of pH 5 but not at neutral pH, and promotes self-assembly in vitro. In terms of tissue distribution, expressed in the brain and adrenal and pituitary glands.

It is found in the cytoplasmic vesicle. Its subcellular location is the secretory vesicle. The protein localises to the neuronal dense core vesicle. The protein resides in the secreted. In terms of biological role, strongly inhibits glucose induced insulin release from the pancreas. Functionally, catestatin inhibits catecholamine release from chromaffin cells and noradrenergic neurons by acting as a non-competitive nicotinic cholinergic antagonist. Can induce mast cell migration, degranulation and production of cytokines and chemokines. Serpinin regulates granule biogenesis in endocrine cells by up-regulating the transcription of protease nexin 1 (SERPINE2) via a cAMP-PKA-SP1 pathway. This leads to inhibition of granule protein degradation in the Golgi complex which in turn promotes granule formation. Serpinin and pGlu-serpinin can enhance both myocardial contractility (inotropy) and relaxation (lusitropy) and this cardio-stimulation requires a beta 1-adrenergic receptor/adenylate cyclase/cAMP/PKA pathway. The chain is Chromogranin-A (Chga) from Rattus norvegicus (Rat).